We begin with the raw amino-acid sequence, 150 residues long: Large ribosomal subunit protein uL15 (150 aa).

The interval 1 to 58 (MNLSGIKPPKGQVKTKKRIGRGMGSGHGKTATRGSKGQHAGTGFSQKRGFEGGQMPLH) is disordered.

Belongs to the universal ribosomal protein uL15 family. As to quaternary structure, part of the 50S ribosomal subunit.

Functionally, binds to the 23S rRNA. This is Large ribosomal subunit protein uL15 from Solibacter usitatus (strain Ellin6076).